Reading from the N-terminus, the 85-residue chain is Follicular dendritic cell secreted peptide (85 aa).

Positions 1–17 (MKKVLLLITAILAVAVG) are cleaved as a signal peptide. Residues 75–83 (SAPTTPLPS) are O-glycosylated at one site.

In terms of processing, O-glycosylated with core 1 or possibly core 8 glycans. In terms of tissue distribution, abundantly expressed in tonsil, lymph node, and trachea; strong expression in prostate; lower expression in thyroid, stomach, and colon.

It localises to the secreted. Its function is as follows. Can bind to the surface of B-lymphoma cells, but not T-lymphoma cells, consistent with a function as a secreted mediator acting upon B-cells. This chain is Follicular dendritic cell secreted peptide (FDCSP), found in Homo sapiens (Human).